The following is a 470-amino-acid chain: FLYWCH transcription factor 2 (470 aa).

Residues 102-148 form a disordered region; the sequence is SQLISEDTRPSASSSPSSTATAVSNSGQSNATSTSSSSTEPEYKPRN. The segment covering 111–140 has biased composition (low complexity); that stretch reads PSASSSPSSTATAVSNSGQSNATSTSSSST. The FLYWCH-type zinc-finger motif lies at 145 to 204; the sequence is KPRNVREKVYADGYIMSFDKKSCCGTKEFWRCERKNDCNARMHSDINTREIVRKLHPHNH.

Probable transcription factor. May bind to the promoters of target genes, including micro-RNA genes, in order to repress expression, and acting redundantly with flh-1 and flh-3. This is FLYWCH transcription factor 2 from Caenorhabditis elegans.